The chain runs to 101 residues: Small ribosomal subunit protein uS14 (101 aa).

Belongs to the universal ribosomal protein uS14 family. As to quaternary structure, part of the 30S ribosomal subunit. Contacts proteins S3 and S10.

In terms of biological role, binds 16S rRNA, required for the assembly of 30S particles and may also be responsible for determining the conformation of the 16S rRNA at the A site. The polypeptide is Small ribosomal subunit protein uS14 (Bartonella bacilliformis (strain ATCC 35685 / KC583 / Herrer 020/F12,63)).